Consider the following 362-residue polypeptide: Transcription factor Sox-7 (362 aa).

A disordered region spans residues 21 to 41; the sequence is EDLSDGLSPHRSPREKGSETR. Residues 32-41 show a composition bias toward basic and acidic residues; that stretch reads SPREKGSETR. Residues 42 to 110 constitute a DNA-binding region (HMG box); it reads IRRPMNAFMV…QHMQDYPNYK (69 aa). The region spanning 245-362 is the Sox C-terminal domain; that stretch reads QTGSSMIPPV…ATYYNSYSVS (118 aa).

As to expression, expressed in the embryonic pronephric sinus as well as posterior cardinal veins.

It localises to the nucleus. Its function is as follows. Transcription factor. Binds to the DNA sequence 5'-AACAAT-3'. Acts downstream of vegt and upstream of nodal signaling to promote endodermal and mesodermal differentiation by promoting vegt-induced expression of both endodermal genes (including endodermin) and mesodermal genes (including snai1/snail and snai2/slug). Induces expression of multiple nodal genes (including nodal, nodal2, nodal4, nodal5 and nodal6) and binds directly to sites within the promoter of the nodal5 gene. The endodermal and mesodermal specification pathways then interact to initiate cardiogenesis. Acts partially redundantly with sox18 during cardiogenesis. Also acts as an antagonist of beta-catenin signaling. Regulates (possibly indirectly) development of the pronephros, the functional larval kidney. The protein is Transcription factor Sox-7 of Xenopus tropicalis (Western clawed frog).